Consider the following 235-residue polypeptide: Sugar fermentation stimulation protein homolog (235 aa).

This sequence belongs to the SfsA family.

The chain is Sugar fermentation stimulation protein homolog from Pseudomonas aeruginosa (strain LESB58).